Here is a 529-residue protein sequence, read N- to C-terminus: Potassium voltage-gated channel subfamily A member 6 (529 aa).

The segment at 1-35 (MRSEKSLTLAAPGEVRGPEGEQQDAGEFQEAEGGG) is disordered. Residues 1 to 171 (MRSEKSLTLA…LLFEYPESSG (171 aa)) lie on the Cytoplasmic side of the membrane. The residue at position 3 (serine 3) is a Phosphoserine. A compositionally biased stretch (acidic residues) spans 21–30 (EQQDAGEFQE). A helical transmembrane segment spans residues 172 to 193 (PARGIAIVSVLVILISIVIFCL). Residues 194-262 (ETLPQFRADG…TLGGSFFTDP (69 aa)) are Extracellular-facing. The segment at 203–238 (GRGGSNEGSGTRLSPASRSHEEEDEDEDSYAFPGSI) is disordered. The span at 210–219 (GSGTRLSPAS) shows a compositional bias: polar residues. Residues 263 to 284 (FFLVETLCIVWFTFELLVRFSA) form a helical membrane-spanning segment. Cysteine 285 carries the S-palmitoyl cysteine lipid modification. Over 285 to 295 (CPSKAAFFRNI) the chain is Cytoplasmic. Residues 296–316 (MNIIDLVAIFPYFITLGTELV) traverse the membrane as a helical segment. The Extracellular segment spans residues 317–337 (QRHEQQSVSGGSGQNGQQAMS). A helical; Voltage-sensor transmembrane segment spans residues 338 to 358 (LAILRVIRLVRVFRIFKLSRH). The Cytoplasmic segment spans residues 359 to 373 (SKGLQILGKTLQASM). The segment at 360–373 (KGLQILGKTLQASM) is S4-S5 linker. A helical membrane pass occupies residues 374–395 (RELGLLIFFLFIGVILFSSAVY). Topologically, residues 396–409 (FAEADDVDSLFPSI) are extracellular. Residues 410-421 (PDAFWWAVVTMT) constitute an intramembrane region (helical). Residues 422–427 (TVGYGD) carry the Selectivity filter motif. The stretch at 422-429 (TVGYGDMY) is an intramembrane region. Over 430–436 (PMTVGGK) the chain is Extracellular. Residues 437–465 (IVGSLCAIAGVLTIALPVPVIVSNFNYFY) form a helical membrane-spanning segment. Residues 466 to 529 (HRETEQEEQG…YAEKRMLTEV (64 aa)) are Cytoplasmic-facing. The segment at 488 to 513 (DLKATDNGLGKPDFAEASRERRPSYL) is disordered. Residues 500–510 (DFAEASRERRP) are compositionally biased toward basic and acidic residues. The residue at position 511 (serine 511) is a Phosphoserine; by PKA. A PDZ-binding motif is present at residues 527 to 529 (TEV).

It belongs to the potassium channel family. A (Shaker) (TC 1.A.1.2) subfamily. Kv1.6/KCNA6 sub-subfamily. As to quaternary structure, homotetramer and heterotetramer of potassium channel proteins. Interacts with KCNAB1 and KCNAB2.

It localises to the cell membrane. It carries out the reaction K(+)(in) = K(+)(out). In terms of biological role, voltage-gated potassium channel that mediates transmembrane potassium transport in excitable membranes. Forms tetrameric potassium-selective channels through which potassium ions pass in accordance with their electrochemical gradient. The channel alternates between opened and closed conformations in response to the voltage difference across the membrane. Can form functional homotetrameric channels and heterotetrameric channels that contain variable proportions of KCNA1, KCNA2, KCNA4, KCNA6, and possibly other family members as well; channel properties depend on the type of alpha subunits that are part of the channel. Channel properties are modulated by cytoplasmic beta subunits that regulate the subcellular location of the alpha subunits and promote rapid inactivation. Homotetrameric channels display rapid activation and slow inactivation. This chain is Potassium voltage-gated channel subfamily A member 6 (Kcna6), found in Mus musculus (Mouse).